A 250-amino-acid chain; its full sequence is MIPEKRIIRRIQSGGCAIHCQDCSISQLCIPFTLNEHELDQLDNIIERKKPIQKGQTLFKAGDELKSLYAIRSGTIKSYTITEQGDEQITGFHLAGDLVGFDAIGSGHHPSFAQALETSMVCEIPFETLDDLSGKMPNLRQQMMRLMSGEIKGDQDMILLLSKKNAEERLAAFIYNLSRRFAQRGFSPREFRLTMTRGDIGNYLGLTVETISRLLGRFQKSGMLAVKGKYITIENSDALAALAGHTRNVA.

Positions 20, 23, and 29 each coordinate [4Fe-4S] cluster. The segment at 20–29 (CQDCSISQLC) is essential for the oxygen-regulated activity. Residues 47–50 (ERKK) are activating region 2A. Residues 60–61 (KA) are activating region 3A. The tract at residues 71–75 (IRSGT) is activating region 1A. Ile-81 is a region of interest (activating region 3B). Positions 85-87 (GDE) are activating region 3C. A region of interest (activating region 3D) is located at residue Phe-112. The tract at residues 116 to 121 (LETSMV) is activating region 1B. Position 122 (Cys-122) interacts with [4Fe-4S] cluster. Positions 123–124 (EI) are activating region 2B. Residues 127 to 128 (ET) are activating region 2C. A dimerization region spans residues 140-159 (RQQMMRLMSGEIKGDQDMIL). The HTH crp-type domain maps to 164–237 (KNAEERLAAF…GKYITIENSD (74 aa)). The interval 181 to 191 (FAQRGFSPREF) is activating region 1C. The segment at residues 197-216 (RGDIGNYLGLTVETISRLLG) is a DNA-binding region (H-T-H motif).

In terms of assembly, homodimer. [4Fe-4S] cluster serves as cofactor.

The protein localises to the cytoplasm. Its function is as follows. Global transcription factor that controls the expression of over 100 target genes in response to anoxia. It facilitates the adaptation to anaerobic growth conditions by regulating the expression of gene products that are involved in anaerobic energy metabolism. When the terminal electron acceptor, O(2), is no longer available, it represses the synthesis of enzymes involved in aerobic respiration and increases the synthesis of enzymes required for anaerobic respiration. The polypeptide is Fumarate and nitrate reduction regulatory protein (fnr) (Salmonella muenster).